The sequence spans 471 residues: Tryptophanase (471 aa).

An N6-(pyridoxal phosphate)lysine modification is found at Lys256.

The protein belongs to the beta-eliminating lyase family. In terms of assembly, homotetramer. Pyridoxal 5'-phosphate is required as a cofactor.

It carries out the reaction L-tryptophan + H2O = indole + pyruvate + NH4(+). It functions in the pathway amino-acid degradation; L-tryptophan degradation via pyruvate pathway; indole and pyruvate from L-tryptophan: step 1/1. This Salinibacter ruber (strain DSM 13855 / M31) protein is Tryptophanase.